Consider the following 316-residue polypeptide: Protoheme IX farnesyltransferase (316 aa).

Transmembrane regions (helical) follow at residues 35–55, 56–76, 119–139, 156–176, 183–203, 229–246, 250–272, and 283–303; these read VMVL…GHVQ, PAIG…SGCL, VVLG…TIVF, IVIG…VVTG, LILF…LALI, IVWY…PVAL, GLVY…IRVL, and AAMG…SALL.

This sequence belongs to the UbiA prenyltransferase family. Protoheme IX farnesyltransferase subfamily.

It localises to the cell inner membrane. It catalyses the reaction heme b + (2E,6E)-farnesyl diphosphate + H2O = Fe(II)-heme o + diphosphate. It functions in the pathway porphyrin-containing compound metabolism; heme O biosynthesis; heme O from protoheme: step 1/1. Functionally, converts heme B (protoheme IX) to heme O by substitution of the vinyl group on carbon 2 of heme B porphyrin ring with a hydroxyethyl farnesyl side group. In Methylobacterium radiotolerans (strain ATCC 27329 / DSM 1819 / JCM 2831 / NBRC 15690 / NCIMB 10815 / 0-1), this protein is Protoheme IX farnesyltransferase.